The chain runs to 454 residues: Uridine kinase (454 aa).

ATP is bound at residue 28–35 (GPSGSGKT).

Belongs to the uridine kinase family.

It is found in the cytoplasm. It localises to the nucleus. It carries out the reaction uridine + ATP = UMP + ADP + H(+). The enzyme catalyses cytidine + ATP = CMP + ADP + H(+). It functions in the pathway pyrimidine metabolism; CTP biosynthesis via salvage pathway; CTP from cytidine: step 1/3. It participates in pyrimidine metabolism; UMP biosynthesis via salvage pathway; UMP from uridine: step 1/1. Functionally, catalyzes the conversion of uridine into UMP and cytidine into CMP in the pyrimidine salvage pathway. This is Uridine kinase (urk1) from Schizosaccharomyces pombe (strain 972 / ATCC 24843) (Fission yeast).